We begin with the raw amino-acid sequence, 201 residues long: MSRYRGPRFKKIRRLGALPGLTSKKPRAGSNLRNQLRPGKKSQYRIRLEEKQKLRFHYGLTEQQLLKYVRIAGKAKGSTGQVLLQLLEMRLDNILFRLGMASTIPQARQLVNHRHILVNGRIVDIPSYRCKPRDIIRVKDEQKSKSLVQNYLDSSSREELPKHLTLHPFQYKGSVNQIIDSKCVGLKINELLVVEYYSRQT.

Positions 23-42 are disordered; that stretch reads SKKPRAGSNLRNQLRPGKKS. An S4 RNA-binding domain is found at 89 to 151; it reads MRLDNILFRL…QKSKSLVQNY (63 aa).

This sequence belongs to the universal ribosomal protein uS4 family. As to quaternary structure, part of the 30S ribosomal subunit. Contacts protein S5. The interaction surface between S4 and S5 is involved in control of translational fidelity.

It is found in the plastid. Its subcellular location is the chloroplast. Its function is as follows. One of the primary rRNA binding proteins, it binds directly to 16S rRNA where it nucleates assembly of the body of the 30S subunit. In terms of biological role, with S5 and S12 plays an important role in translational accuracy. This is Small ribosomal subunit protein uS4c (rps4) from Morus indica (Mulberry).